A 261-amino-acid chain; its full sequence is Kallikrein 1-related peptidase b21 (261 aa).

The N-terminal stretch at 1–17 (MRFLILFLALSLGEIDA) is a signal peptide. Positions 18-24 (APPVQSR) are cleaved as a propeptide — activation peptide. Residues 25-258 (IVGGFNCEKN…FTSWIKDTMA (234 aa)) enclose the Peptidase S1 domain. Intrachain disulfides connect Cys31–Cys173, Cys50–Cys66, Cys152–Cys219, Cys184–Cys198, and Cys209–Cys234. Residue His65 is the Charge relay system of the active site. Asn102 carries an N-linked (GlcNAc...) asparagine glycan. Asp120 acts as the Charge relay system in catalysis. Ser213 serves as the catalytic Charge relay system.

This sequence belongs to the peptidase S1 family. Kallikrein subfamily. As to expression, expressed in testis and submaxillary gland. In the testis, expression localized specifically to Leydig cells in the interstitial tissues.

It catalyses the reaction Preferential cleavage of Arg-|-Xaa bonds in small molecule substrates. Highly selective action to release kallidin (lysyl-bradykinin) from kininogen involves hydrolysis of Met-|-Xaa or Leu-|-Xaa.. Inhibited by protease inhibitors diisopropylfluorophosphate, leupeptin, antipain, benzamidine, phenylmethylsulfonyl fluoride and soybean trypsin inhibitor. Functionally, glandular kallikreins cleave Met-Lys and Arg-Ser bonds in kininogen to release Lys-bradykinin. Displays trypsin-like substrate specificity and shows activity towards casein, gelatin, fibronectin and IGFBP3. The protein is Kallikrein 1-related peptidase b21 (Klk1b21) of Mus musculus (Mouse).